The chain runs to 264 residues: H-2 class II histocompatibility antigen, E-D beta chain (264 aa).

Positions M1–R31 are cleaved as a signal peptide. Residues P32 to R121 are beta-1. Residues P32–K225 are Extracellular-facing. 2 cysteine pairs are disulfide-bonded: C42–C106 and C144–C200. N46 is a glycosylation site (N-linked (GlcNAc...) asparagine). A beta-2 region spans residues V122–W215. The Ig-like C1-type domain maps to P124–E214. Positions K216–K225 are connecting peptide. A helical membrane pass occupies residues M226–F248. The Cytoplasmic segment spans residues R249–S264.

The protein belongs to the MHC class II family.

It is found in the membrane. This is H-2 class II histocompatibility antigen, E-D beta chain from Mus musculus (Mouse).